A 408-amino-acid polypeptide reads, in one-letter code: Putative mannan endo-1,4-beta-mannosidase 4 (408 aa).

A signal peptide spans 1 to 23; that stretch reads MKCLCFIVLLAIVIAQSYVGVEA. Residue asparagine 73 is glycosylated (N-linked (GlcNAc...) asparagine). Substrate is bound by residues tryptophan 85 and asparagine 201. Glutamate 202 (proton donor) is an active-site residue. Glutamate 322 functions as the Nucleophile in the catalytic mechanism. Tryptophan 364 contributes to the substrate binding site.

It belongs to the glycosyl hydrolase 5 (cellulase A) family.

It is found in the secreted. The catalysed reaction is Random hydrolysis of (1-&gt;4)-beta-D-mannosidic linkages in mannans, galactomannans and glucomannans.. The polypeptide is Putative mannan endo-1,4-beta-mannosidase 4 (MAN4) (Arabidopsis thaliana (Mouse-ear cress)).